We begin with the raw amino-acid sequence, 562 residues long: uncharacterized protein (562 aa).

5 helical membrane passes run 10 to 27 (IYPE…YWVG), 34 to 53 (FSLG…GQFD), 63 to 85 (IFFL…QGIA), 92 to 114 (ALFA…KIAG), and 155 to 177 (FSVI…AIVL). RCK C-terminal domains are found at residues 204-288 (TENA…HPDS) and 290-377 (DETQ…QLGV). Helical transmembrane passes span 387 to 404 (VAFW…GSLV), 408 to 430 (GNLP…FSWV), 443 to 465 (PTVW…ISAG), 475 to 497 (LGFS…AALV), 504 to 526 (FHPA…LGMI), and 539 to 561 (YTIT…ILIL).

The protein belongs to the AAE transporter (TC 2.A.81) family.

The protein localises to the cell membrane. This is an uncharacterized protein from Shewanella oneidensis (strain ATCC 700550 / JCM 31522 / CIP 106686 / LMG 19005 / NCIMB 14063 / MR-1).